Reading from the N-terminus, the 2871-residue chain is Desmoplakin (2871 aa).

The tract at residues Met-1–Glu-584 is interaction with PKP1, JUP, PKP2. The globular 1 stretch occupies residues Met-1–Lys-1056. Ser-22 and Ser-53 each carry phosphoserine. Tyr-56 carries the post-translational modification Phosphotyrosine. Thr-61 carries the post-translational modification Phosphothreonine. Phosphoserine occurs at positions 165, 166, and 176. Spectrin repeat units follow at residues Ser-178 to Gln-271 and Leu-272 to Asn-375. The Spectrin 3a repeat unit spans residues Ala-376 to Val-446. The 58-residue stretch at Asn-458–Pro-515 folds into the SH3 domain. The stretch at Asn-516–Lys-545 is one Spectrin 3b repeat. Spectrin repeat units follow at residues Ser-546–Pro-627, Val-654–Thr-769, and Val-770–Lys-883. Residues Ser-1018 to Arg-1945 are a coiled coil. A central fibrous rod domain region spans residues Phe-1057 to Arg-1945. 3 positions are modified to phosphoserine: Ser-1658, Ser-1708, and Ser-2024. The globular 2 stretch occupies residues Pro-1946–His-2871. Residues Thr-1960–Met-2208 form a 4.5 X 38 AA tandem repeats (Domain A) region. Plectin repeat units follow at residues Gln-2009–Thr-2045, Val-2046–Arg-2083, Gln-2084–Gly-2121, Met-2122–Tyr-2159, Asn-2163–Gly-2197, Leu-2198–Val-2233, Lys-2251–Ala-2288, Leu-2289–Lys-2326, Glu-2327–Gly-2364, Ile-2365–Ser-2402, Ser-2406–Gly-2440, Ser-2456–Phe-2493, Thr-2507–Phe-2544, Ser-2610–Gly-2647, Gln-2648–Ala-2685, Gln-2724–Ala-2761, and Gln-2762–Gly-2799. 3 positions are modified to phosphoserine: Ser-2207, Ser-2209, and Ser-2225. The segment at Asp-2244 to Leu-2446 is 4.5 X 38 AA tandem repeats (Domain B). Residues Phe-2609–Ala-2822 form a 4.5 X 38 AA tandem repeats (Domain C) region. Phosphoserine is present on residues Ser-2810 and Ser-2815. Residues Ser-2810 to Pro-2823 show a composition bias toward polar residues. Residues Ser-2810–His-2871 are disordered. Position 2817 is a phosphotyrosine (Tyr-2817). Phosphoserine is present on residues Ser-2820, Ser-2821, and Ser-2825. The 6 X 4 AA tandem repeats of G-S-R-[SR] stretch occupies residues Gly-2824–Arg-2847. The span at Gly-2824–Arg-2847 shows a compositional bias: low complexity. An omega-N-methylarginine mark is found at Arg-2826 and Arg-2847. Position 2849 is a phosphoserine (Ser-2849). Thr-2853 bears the Phosphothreonine mark. Low complexity predominate over residues Ser-2856 to His-2871. At Ser-2868 the chain carries Phosphoserine.

It belongs to the plakin or cytolinker family. In terms of assembly, homodimer. Interacts with COL17A1 (via cytoplasmic region). Interacts with DSC2. Interacts with PKP2. Interacts with PKP1. Interacts weakly with TMEM65. In terms of processing, phosphorylation at Ser-2849 increases association with intermediate filament cytokeratin, potentially facilitating interaction between desmosome junctions and intermediate filament architecture. Expressed in oral mucosa (at protein level). Expressed in arrector pili muscle (at protein level). Expressed in the heart in the heart (at protein level). As to expression, apparently an obligate constituent of all desmosomes. In terms of tissue distribution, resides predominantly in tissues and cells of stratified origin.

The protein localises to the cell junction. It is found in the desmosome. It localises to the cell membrane. The protein resides in the cytoplasm. Its function is as follows. Major high molecular weight protein of desmosomes. Regulates profibrotic gene expression in cardiomyocytes via activation of the MAPK14/p38 MAPK signaling cascade and increase in TGFB1 protein abundance. This chain is Desmoplakin (DSP), found in Homo sapiens (Human).